The sequence spans 439 residues: Ribosomal protein uS12 methylthiotransferase RimO (439 aa).

One can recognise an MTTase N-terminal domain in the interval 2 to 114 (SKLYLMSLGC…IDEMILKKTN (113 aa)). The [4Fe-4S] cluster site is built by C11, C45, C77, C146, C150, and C153. The 232-residue stretch at 132-363 (TGSNSHAFIK…VDEVIEKSFE (232 aa)) folds into the Radical SAM core domain.

The protein belongs to the methylthiotransferase family. RimO subfamily. Requires [4Fe-4S] cluster as cofactor.

The protein resides in the cytoplasm. It catalyses the reaction L-aspartate(89)-[ribosomal protein uS12]-hydrogen + (sulfur carrier)-SH + AH2 + 2 S-adenosyl-L-methionine = 3-methylsulfanyl-L-aspartate(89)-[ribosomal protein uS12]-hydrogen + (sulfur carrier)-H + 5'-deoxyadenosine + L-methionine + A + S-adenosyl-L-homocysteine + 2 H(+). Its function is as follows. Catalyzes the methylthiolation of an aspartic acid residue of ribosomal protein uS12. This chain is Ribosomal protein uS12 methylthiotransferase RimO, found in Campylobacter jejuni subsp. jejuni serotype O:23/36 (strain 81-176).